We begin with the raw amino-acid sequence, 267 residues long: RWD domain-containing protein 3 (267 aa).

An RWD domain is found at 7–114 (QELSALAAIF…LWIQQNLRLV (108 aa)). 2 interaction with UBE2I/UBC9 regions span residues 13 to 15 (AAI) and 100 to 102 (VHE).

As to quaternary structure, interacts with UBE2I/UBC9, NFKBIA, HIF1A and NCOA2.

Its subcellular location is the nucleus. It is found in the cytoplasm. Its function is as follows. Enhancer of SUMO conjugation. Via its interaction with UBE2I/UBC9, increases SUMO conjugation to proteins by promoting the binding of E1 and E2 enzymes, thioester linkage between SUMO and UBE2I/UBC9 and transfer of SUMO to specific target proteins which include HIF1A, PIAS, NFKBIA, NR3C1 and TOP1. Positively regulates the NF-kappa-B signaling pathway by enhancing the sumoylation of NF-kappa-B inhibitor alpha (NFKBIA), promoting its stabilization which consequently leads to an increased inhibition of NF-kappa-B transcriptional activity. Negatively regulates the hypoxia-inducible factor-1 alpha (HIF1A) signaling pathway by increasing the sumoylation of HIF1A, promoting its stabilization, transcriptional activity and the expression of its target gene VEGFA during hypoxia. Has no effect on ubiquitination. The polypeptide is RWD domain-containing protein 3 (Rwdd3) (Mus musculus (Mouse)).